Reading from the N-terminus, the 537-residue chain is uncharacterized protein (537 aa).

This sequence belongs to the RuBisCO large chain family. Type IV subfamily.

Unknown. Probably does not have RuBisCO activity. This is an uncharacterized protein from Symbiodinium sp. (Dinoflagellate).